Here is a 634-residue protein sequence, read N- to C-terminus: DNA-directed RNA polymerase subunit gamma (634 aa).

The Zn(2+) site is built by Cys-74, Cys-76, Cys-89, and Cys-92. Residues Asp-471, Asp-473, and Asp-475 each contribute to the Mg(2+) site.

The protein belongs to the RNA polymerase beta' chain family. RpoC1 subfamily. As to quaternary structure, in cyanobacteria the RNAP catalytic core is composed of 2 alpha, 1 beta, 1 beta', 1 gamma and 1 omega subunit. When a sigma factor is associated with the core the holoenzyme is formed, which can initiate transcription. Requires Mg(2+) as cofactor. The cofactor is Zn(2+).

The enzyme catalyses RNA(n) + a ribonucleoside 5'-triphosphate = RNA(n+1) + diphosphate. Functionally, DNA-dependent RNA polymerase catalyzes the transcription of DNA into RNA using the four ribonucleoside triphosphates as substrates. The chain is DNA-directed RNA polymerase subunit gamma from Synechococcus sp. (strain CC9311).